The primary structure comprises 480 residues: MHTKTIVELAQGFKDKDFSCVELTQYYLNRIDQSDLNAFITVTDELALAQAQVADDKIASGNANILTGIPYAHKDIFCTKGVKTSAGSRMLDTFVSPYDATVSQKLNQVNLVMLGKTNMDEFAMGSSNENSFYGAVKNPWNYLKIPGGSSGGSAASVAGGLSCFATGTDTGGSIRQPASLCGITGIKPTYGRISRYGMIAYASSLDQAGPMTKTAQDAAIVLNVMAGFDEKDSTSVEQKVPDYTTHLNDSIKGLIIGLPKEFFSSGLDDEVANNIMAAVKEFEAMGAIVKEVSLPNLAYAIPVYYIVAPCECSSNLSRLDGVRYGYRAKNVKNLEDLYLRSRSEGFGEEVKRRIMIGAYALSAGYYDAYYLKAQKVRHLISDDFKKVFEQIDVIMGPVSPTTAFDLGSVKDPVSMYLADIYTLSANLAGLPGMSIPAGFAQNLPVGLQLIGNFWSESRLLNIAHQFQLQTDWHLKTPQEC.

Active-site charge relay system residues include lysine 74 and serine 149. Serine 173 acts as the Acyl-ester intermediate in catalysis.

It belongs to the amidase family. GatA subfamily. In terms of assembly, heterotrimer of A, B and C subunits.

The catalysed reaction is L-glutamyl-tRNA(Gln) + L-glutamine + ATP + H2O = L-glutaminyl-tRNA(Gln) + L-glutamate + ADP + phosphate + H(+). In terms of biological role, allows the formation of correctly charged Gln-tRNA(Gln) through the transamidation of misacylated Glu-tRNA(Gln) in organisms which lack glutaminyl-tRNA synthetase. The reaction takes place in the presence of glutamine and ATP through an activated gamma-phospho-Glu-tRNA(Gln). The protein is Glutamyl-tRNA(Gln) amidotransferase subunit A of Ruthia magnifica subsp. Calyptogena magnifica.